We begin with the raw amino-acid sequence, 348 residues long: Protein RecA (348 aa).

69-76 (GPESSGKT) contributes to the ATP binding site.

This sequence belongs to the RecA family.

It is found in the cytoplasm. Its function is as follows. Can catalyze the hydrolysis of ATP in the presence of single-stranded DNA, the ATP-dependent uptake of single-stranded DNA by duplex DNA, and the ATP-dependent hybridization of homologous single-stranded DNAs. It interacts with LexA causing its activation and leading to its autocatalytic cleavage. This Picosynechococcus sp. (strain ATCC 27264 / PCC 7002 / PR-6) (Agmenellum quadruplicatum) protein is Protein RecA.